The primary structure comprises 391 residues: Coiled-coil domain-containing protein 85C (391 aa).

Coiled-coil stretches lie at residues 19-86 (EELL…RELC) and 116-146 (KEVG…KEII). Disordered stretches follow at residues 155-238 (GAGS…LNDS) and 278-303 (PYHS…TRVT). The segment covering 157–175 (GSRSSIDSQNSLTNLNGSS) has biased composition (polar residues). Over residues 182–194 (DGSSTSSTGSAGS) the composition is skewed to low complexity. The segment covering 280-303 (HSESQLSPLPQYQEPLQNGSTRVT) has biased composition (polar residues).

The protein belongs to the CCDC85 family.

It localises to the cell junction. The protein resides in the tight junction. It is found in the adherens junction. May play a role in cell-cell adhesion and epithelium development through its interaction with proteins of the beta-catenin family. May play an important role in cortical development, especially in the maintenance of radial glia. This is Coiled-coil domain-containing protein 85C (ccdc85c) from Xenopus tropicalis (Western clawed frog).